A 430-amino-acid polypeptide reads, in one-letter code: Probable sugar isomerase R00627 (430 aa).

H257, D289, and D291 together coordinate Mn(2+).

This sequence belongs to the rhamnose isomerase family. It depends on Mn(2+) as a cofactor.

The polypeptide is Probable sugar isomerase R00627 (Rhizobium meliloti (strain 1021) (Ensifer meliloti)).